A 452-amino-acid polypeptide reads, in one-letter code: Probable glycine dehydrogenase (decarboxylating) subunit 1 (452 aa).

This sequence belongs to the GcvP family. N-terminal subunit subfamily. The glycine cleavage system is composed of four proteins: P, T, L and H. In this organism, the P 'protein' is a heterodimer of two subunits.

It carries out the reaction N(6)-[(R)-lipoyl]-L-lysyl-[glycine-cleavage complex H protein] + glycine + H(+) = N(6)-[(R)-S(8)-aminomethyldihydrolipoyl]-L-lysyl-[glycine-cleavage complex H protein] + CO2. Its function is as follows. The glycine cleavage system catalyzes the degradation of glycine. The P protein binds the alpha-amino group of glycine through its pyridoxal phosphate cofactor; CO(2) is released and the remaining methylamine moiety is then transferred to the lipoamide cofactor of the H protein. In Nitrosospira multiformis (strain ATCC 25196 / NCIMB 11849 / C 71), this protein is Probable glycine dehydrogenase (decarboxylating) subunit 1.